We begin with the raw amino-acid sequence, 562 residues long: Phosphoenolpyruvate carboxykinase (ATP) (562 aa).

265-272 (GLSGTGKT) provides a ligand contact to ATP.

The protein belongs to the phosphoenolpyruvate carboxykinase (ATP) family.

The catalysed reaction is oxaloacetate + ATP = phosphoenolpyruvate + ADP + CO2. The protein operates within carbohydrate biosynthesis; gluconeogenesis. This chain is Phosphoenolpyruvate carboxykinase (ATP) (pckA), found in Dictyostelium discoideum (Social amoeba).